A 586-amino-acid polypeptide reads, in one-letter code: Kelch-like protein 7 (586 aa).

In terms of domain architecture, BTB spans 44–111 (CDVILMVQER…AYTARISVNS (68 aa)). In terms of domain architecture, BACK spans 146 to 248 (CLGISVLAEC…SKNFLSKTVQ (103 aa)). Kelch repeat units lie at residues 294–336 (RIAL…FWDN), 337–382 (VVYI…AAEG), 383–430 (KIYT…EANG), 431–481 (LIYV…FVKD), 483–528 (IFAV…AVGS), and 530–575 (VYVL…CVVD).

As to quaternary structure, homodimer. Component of the BCR(KLHL7) E3 ubiquitin ligase complex, at least composed of CUL3 and KLHL7 and RBX1. In terms of tissue distribution, widely expressed, with highest levels in adult and fetal heart, CNS and adult testis.

It is found in the nucleus. The protein localises to the cytoplasm. Its pathway is protein modification; protein ubiquitination. Its function is as follows. Substrate-specific adapter of a BCR (BTB-CUL3-RBX1) E3 ubiquitin ligase complex. The BCR(KLHL7) complex acts by mediating ubiquitination and subsequent degradation of substrate proteins. Probably mediates 'Lys-48'-linked ubiquitination. The chain is Kelch-like protein 7 (KLHL7) from Homo sapiens (Human).